A 51-amino-acid polypeptide reads, in one-letter code: Cytochrome b559 subunit beta (51 aa).

Residues 26–42 form a helical membrane-spanning segment; the sequence is WLAVHALAVPTVFFIGS. H30 lines the heme pocket.

It belongs to the PsbE/PsbF family. In terms of assembly, heterodimer of an alpha subunit and a beta subunit. PSII is composed of 1 copy each of membrane proteins PsbA, PsbB, PsbC, PsbD, PsbE, PsbF, PsbH, PsbI, PsbJ, PsbK, PsbL, PsbM, PsbT, PsbY, PsbZ, Psb30/Ycf12, at least 3 peripheral proteins of the oxygen-evolving complex and a large number of cofactors. It forms dimeric complexes. Requires heme b as cofactor.

It is found in the plastid. It localises to the chloroplast thylakoid membrane. This b-type cytochrome is tightly associated with the reaction center of photosystem II (PSII). PSII is a light-driven water:plastoquinone oxidoreductase that uses light energy to abstract electrons from H(2)O, generating O(2) and a proton gradient subsequently used for ATP formation. It consists of a core antenna complex that captures photons, and an electron transfer chain that converts photonic excitation into a charge separation. The protein is Cytochrome b559 subunit beta of Bigelowiella natans (Pedinomonas minutissima).